Consider the following 253-residue polypeptide: Phosphate import ATP-binding protein PstB 3 (253 aa).

The 241-residue stretch at 8–248 (LVINNLDLYY…PQDERTENYI (241 aa)) folds into the ABC transporter domain. ATP is bound at residue 40–47 (GPSGCGKS).

Belongs to the ABC transporter superfamily. Phosphate importer (TC 3.A.1.7) family. The complex is composed of two ATP-binding proteins (PstB), two transmembrane proteins (PstC and PstA) and a solute-binding protein (PstS).

It localises to the cell membrane. It catalyses the reaction phosphate(out) + ATP + H2O = ADP + 2 phosphate(in) + H(+). Functionally, part of the ABC transporter complex PstSACB involved in phosphate import. Responsible for energy coupling to the transport system. The protein is Phosphate import ATP-binding protein PstB 3 of Streptococcus agalactiae serotype III (strain NEM316).